Consider the following 502-residue polypeptide: Protein YdgA (502 aa).

An N-terminal signal peptide occupies residues 1 to 19 (MNKSLVAVGVIVALGVVWT).

This sequence to E.coli YihF and H.influenzae HI_1236. As to quaternary structure, homodimer.

It is found in the cell inner membrane. The chain is Protein YdgA (ydgA) from Escherichia coli (strain K12).